Here is a 211-residue protein sequence, read N- to C-terminus: Uracil phosphoribosyltransferase (211 aa).

5-phospho-alpha-D-ribose 1-diphosphate-binding positions include arginine 81, arginine 106, and 133 to 141 (DPMLATGNS). Uracil contacts are provided by residues isoleucine 196 and 201 to 203 (GDA). Aspartate 202 lines the 5-phospho-alpha-D-ribose 1-diphosphate pocket.

It belongs to the UPRTase family. The cofactor is Mg(2+).

It catalyses the reaction UMP + diphosphate = 5-phospho-alpha-D-ribose 1-diphosphate + uracil. It functions in the pathway pyrimidine metabolism; UMP biosynthesis via salvage pathway; UMP from uracil: step 1/1. Its activity is regulated as follows. Allosterically activated by GTP. Functionally, catalyzes the conversion of uracil and 5-phospho-alpha-D-ribose 1-diphosphate (PRPP) to UMP and diphosphate. The chain is Uracil phosphoribosyltransferase from Myxococcus xanthus (strain DK1622).